An 800-amino-acid chain; its full sequence is Elongation factor G, mitochondrial (800 aa).

Residues 1–59 (MRVIRAVATLHAGRAAAVRQGVRSVSLGACRAAVETPSLRSAGSQFESRRLFSRSSYLR) constitute a mitochondrion transit peptide. In terms of domain architecture, tr-type G spans 99–385 (ARVRNIGIAA…AVCDYLPNPN (287 aa)). Residues 108-115 (AHIDSGKT), 183-187 (DTPGH), and 237-240 (NKMD) each bind GTP.

Belongs to the TRAFAC class translation factor GTPase superfamily. Classic translation factor GTPase family. EF-G/EF-2 subfamily.

The protein resides in the mitochondrion. Its pathway is protein biosynthesis; polypeptide chain elongation. Its function is as follows. Mitochondrial GTPase that catalyzes the GTP-dependent ribosomal translocation step during translation elongation. During this step, the ribosome changes from the pre-translocational (PRE) to the post-translocational (POST) state as the newly formed A-site-bound peptidyl-tRNA and P-site-bound deacylated tRNA move to the P and E sites, respectively. Catalyzes the coordinated movement of the two tRNA molecules, the mRNA and conformational changes in the ribosome. This chain is Elongation factor G, mitochondrial (mef1), found in Neurospora crassa (strain ATCC 24698 / 74-OR23-1A / CBS 708.71 / DSM 1257 / FGSC 987).